We begin with the raw amino-acid sequence, 149 residues long: Putative pre-16S rRNA nuclease (149 aa).

The protein belongs to the YqgF nuclease family.

It is found in the cytoplasm. In terms of biological role, could be a nuclease involved in processing of the 5'-end of pre-16S rRNA. This is Putative pre-16S rRNA nuclease from Cupriavidus metallidurans (strain ATCC 43123 / DSM 2839 / NBRC 102507 / CH34) (Ralstonia metallidurans).